The sequence spans 150 residues: Ribonuclease HI (150 aa).

In terms of domain architecture, RNase H type-1 spans 1 to 141; it reads MKSINAYTDG…VDVLARGQAM (141 aa). Residues Asp9, Glu47, Asp69, and Asp133 each contribute to the Mg(2+) site.

It belongs to the RNase H family. In terms of assembly, monomer. The cofactor is Mg(2+).

The protein localises to the cytoplasm. The catalysed reaction is Endonucleolytic cleavage to 5'-phosphomonoester.. In terms of biological role, endonuclease that specifically degrades the RNA of RNA-DNA hybrids. This is Ribonuclease HI from Xylella fastidiosa (strain 9a5c).